The following is a 66-amino-acid chain: Moricin-1 (66 aa).

Positions 1 to 24 (MNILKFFFVFIVAMSLVSCSTAAP) are cleaved as a signal peptide.

Expressed in fat body and to a lesser extent in hemocyte and Malpighian tubules.

It localises to the secreted. Functionally, has antibacterial activity against Gram-positive and Gram-negative bacteria. Probably acts by disturbing membrane functions with its amphipathic structure. The protein is Moricin-1 (MOR1) of Bombyx mori (Silk moth).